Consider the following 456-residue polypeptide: Serine--tRNA ligase (456 aa).

Residues 49-69 form a disordered region; the sequence is HERNEVSSTIGELKQAGEEEA. 241-243 serves as a coordination point for L-serine; the sequence is TAE. ATP is bound by residues 272 to 274 and V288; that span reads RQE. An L-serine-binding site is contributed by E295. 368-371 is an ATP binding site; the sequence is EVSS. S404 is an L-serine binding site.

It belongs to the class-II aminoacyl-tRNA synthetase family. Type-1 seryl-tRNA synthetase subfamily. In terms of assembly, homodimer. The tRNA molecule binds across the dimer.

The protein resides in the cytoplasm. It catalyses the reaction tRNA(Ser) + L-serine + ATP = L-seryl-tRNA(Ser) + AMP + diphosphate + H(+). The enzyme catalyses tRNA(Sec) + L-serine + ATP = L-seryl-tRNA(Sec) + AMP + diphosphate + H(+). The protein operates within aminoacyl-tRNA biosynthesis; selenocysteinyl-tRNA(Sec) biosynthesis; L-seryl-tRNA(Sec) from L-serine and tRNA(Sec): step 1/1. In terms of biological role, catalyzes the attachment of serine to tRNA(Ser). Is also able to aminoacylate tRNA(Sec) with serine, to form the misacylated tRNA L-seryl-tRNA(Sec), which will be further converted into selenocysteinyl-tRNA(Sec). The polypeptide is Serine--tRNA ligase (Halorubrum lacusprofundi (strain ATCC 49239 / DSM 5036 / JCM 8891 / ACAM 34)).